Reading from the N-terminus, the 319-residue chain is Inactive hydroxysteroid dehydrogenase-like protein 1 (319 aa).

Residues Ala2–Ala82 are required for mitochondria translocation. Residues Gly74–Ala80, Lys99, and Asp125 contribute to the NADP(+) site.

It belongs to the short-chain dehydrogenases/reductases (SDR) family. 17-beta-HSD 3 subfamily.

The protein resides in the mitochondrion. The polypeptide is Inactive hydroxysteroid dehydrogenase-like protein 1 (hsdl1) (Danio rerio (Zebrafish)).